Reading from the N-terminus, the 569-residue chain is Cytochrome P450 monooxygenase abl1 (569 aa).

Cys-464 lines the heme pocket.

The protein belongs to the cytochrome P450 family. The cofactor is heme.

Its pathway is hormone biosynthesis. In terms of biological role, cytochrome P450 monooxygenase; part of the gene cluster that mediates the biosynthesis of abscisic acid (ABA), a phytohormone that acts antagonistically toward salicylic acid (SA), jasmonic acid (JA) and ethylene (ETH) signaling, to impede plant defense responses. The first step of the pathway catalyzes the reaction from farnesyl diphosphate to alpha-ionylideneethane performed by the alpha-ionylideneethane synthase abl3 via a three-step reaction mechanism involving 2 neutral intermediates, beta-farnesene and allofarnesene. The cytochrome P450 monooxygenase abl1 might then be involved in the conversion of alpha-ionylideneethane to alpha-ionylideneacetic acid. Alpha-ionylideneacetic acid is further converted to abscisic acid in 2 steps involving the cytochrome P450 monooxygenase abl2 and the short-chain dehydrogenase/reductase abl4, via the intermediates 1'-deoxy-ABA or 1',4'-trans-diol-ABA, depending on the order of action of these 2 enzymes. Abl2 is responsible for the hydroxylation of carbon atom C-1' and abl4 might be involved in the oxidation of the C-4' carbon atom. This is Cytochrome P450 monooxygenase abl1 from Leptosphaeria maculans (strain JN3 / isolate v23.1.3 / race Av1-4-5-6-7-8) (Blackleg fungus).